The primary structure comprises 374 residues: UDP-N-acetylglucosamine--N-acetylmuramyl-(pentapeptide) pyrophosphoryl-undecaprenol N-acetylglucosamine transferase (374 aa).

UDP-N-acetyl-alpha-D-glucosamine contacts are provided by residues 14–16 (TGG), N125, R168, S196, and Q297.

This sequence belongs to the glycosyltransferase 28 family. MurG subfamily.

The protein resides in the cell inner membrane. The catalysed reaction is di-trans,octa-cis-undecaprenyl diphospho-N-acetyl-alpha-D-muramoyl-L-alanyl-D-glutamyl-meso-2,6-diaminopimeloyl-D-alanyl-D-alanine + UDP-N-acetyl-alpha-D-glucosamine = di-trans,octa-cis-undecaprenyl diphospho-[N-acetyl-alpha-D-glucosaminyl-(1-&gt;4)]-N-acetyl-alpha-D-muramoyl-L-alanyl-D-glutamyl-meso-2,6-diaminopimeloyl-D-alanyl-D-alanine + UDP + H(+). The protein operates within cell wall biogenesis; peptidoglycan biosynthesis. Cell wall formation. Catalyzes the transfer of a GlcNAc subunit on undecaprenyl-pyrophosphoryl-MurNAc-pentapeptide (lipid intermediate I) to form undecaprenyl-pyrophosphoryl-MurNAc-(pentapeptide)GlcNAc (lipid intermediate II). The chain is UDP-N-acetylglucosamine--N-acetylmuramyl-(pentapeptide) pyrophosphoryl-undecaprenol N-acetylglucosamine transferase from Rhodopseudomonas palustris (strain BisA53).